Consider the following 430-residue polypeptide: Gamma-glutamyl phosphate reductase (430 aa).

The protein belongs to the gamma-glutamyl phosphate reductase family.

It is found in the cytoplasm. The enzyme catalyses L-glutamate 5-semialdehyde + phosphate + NADP(+) = L-glutamyl 5-phosphate + NADPH + H(+). The protein operates within amino-acid biosynthesis; L-proline biosynthesis; L-glutamate 5-semialdehyde from L-glutamate: step 2/2. In terms of biological role, catalyzes the NADPH-dependent reduction of L-glutamate 5-phosphate into L-glutamate 5-semialdehyde and phosphate. The product spontaneously undergoes cyclization to form 1-pyrroline-5-carboxylate. This is Gamma-glutamyl phosphate reductase from Rhodopseudomonas palustris (strain TIE-1).